Consider the following 176-residue polypeptide: Large ribosomal subunit protein uL6 (176 aa).

This sequence belongs to the universal ribosomal protein uL6 family. As to quaternary structure, part of the 50S ribosomal subunit.

This protein binds to the 23S rRNA, and is important in its secondary structure. It is located near the subunit interface in the base of the L7/L12 stalk, and near the tRNA binding site of the peptidyltransferase center. The protein is Large ribosomal subunit protein uL6 of Methanosarcina mazei (strain ATCC BAA-159 / DSM 3647 / Goe1 / Go1 / JCM 11833 / OCM 88) (Methanosarcina frisia).